The primary structure comprises 156 residues: Small ribosomal subunit protein eS10 (156 aa).

The interval 91–156 (LKRQTRPEAA…FGRGRQEQEE (66 aa)) is disordered. Residues 95–119 (TRPEAARPRPKEGAPRAQVGEDRAG) are compositionally biased toward basic and acidic residues.

The protein belongs to the eukaryotic ribosomal protein eS10 family.

The protein resides in the cytoplasm. The chain is Small ribosomal subunit protein eS10 (RPS10) from Lumbricus rubellus (Humus earthworm).